The chain runs to 447 residues: Tryptophan synthase beta chain (447 aa).

An N6-(pyridoxal phosphate)lysine modification is found at K92. The segment at 408 to 447 is disordered; it reads GLAVKGGEQPKEFSDGPPLGKLAPSGGSAVREATSVGARK.

This sequence belongs to the TrpB family. As to quaternary structure, tetramer of two alpha and two beta chains. It depends on pyridoxal 5'-phosphate as a cofactor.

The catalysed reaction is (1S,2R)-1-C-(indol-3-yl)glycerol 3-phosphate + L-serine = D-glyceraldehyde 3-phosphate + L-tryptophan + H2O. Its pathway is amino-acid biosynthesis; L-tryptophan biosynthesis; L-tryptophan from chorismate: step 5/5. The beta subunit is responsible for the synthesis of L-tryptophan from indole and L-serine. In Polaromonas sp. (strain JS666 / ATCC BAA-500), this protein is Tryptophan synthase beta chain.